The chain runs to 316 residues: Acetaldehyde dehydrogenase (316 aa).

NAD(+) is bound at residue 11–14; sequence SGNI. The Acyl-thioester intermediate role is filled by Cys-131. Residues 162–170 and Asn-289 contribute to the NAD(+) site; that span reads SAGPGTRAN.

This sequence belongs to the acetaldehyde dehydrogenase family. As to quaternary structure, interacts with MhpE.

It catalyses the reaction acetaldehyde + NAD(+) + CoA = acetyl-CoA + NADH + H(+). It functions in the pathway aromatic compound metabolism; 3-phenylpropanoate degradation. Its function is as follows. Catalyzes the conversion of acetaldehyde to acetyl-CoA, using NAD(+) and coenzyme A. Is the final enzyme in the meta-cleavage pathway for the degradation of aromatic compounds. This Escherichia coli O7:K1 (strain IAI39 / ExPEC) protein is Acetaldehyde dehydrogenase.